We begin with the raw amino-acid sequence, 206 residues long: Small ribosomal subunit protein uS4 (206 aa).

The 64-residue stretch at 96 to 159 (TRLDNVVYRM…KKQARISASL (64 aa)) folds into the S4 RNA-binding domain.

Belongs to the universal ribosomal protein uS4 family. In terms of assembly, part of the 30S ribosomal subunit. Contacts protein S5. The interaction surface between S4 and S5 is involved in control of translational fidelity.

In terms of biological role, one of the primary rRNA binding proteins, it binds directly to 16S rRNA where it nucleates assembly of the body of the 30S subunit. Its function is as follows. With S5 and S12 plays an important role in translational accuracy. This Shewanella violacea protein is Small ribosomal subunit protein uS4.